A 41-amino-acid polypeptide reads, in one-letter code: MKVANSLRSLKLRHRDCQVVRRKGRVYVINKTQKRYKARQG.

It belongs to the bacterial ribosomal protein bL36 family.

This chain is Large ribosomal subunit protein bL36, found in Cereibacter sphaeroides (strain ATCC 17029 / ATH 2.4.9) (Rhodobacter sphaeroides).